The chain runs to 149 residues: Protein NrdI (149 aa).

The protein belongs to the NrdI family.

Probably involved in ribonucleotide reductase function. This chain is Protein NrdI, found in Malacoplasma penetrans (strain HF-2) (Mycoplasma penetrans).